We begin with the raw amino-acid sequence, 640 residues long: Probable potassium transport system protein Kup 1 (640 aa).

12 consecutive transmembrane segments (helical) span residues 25–45, 65–85, 115–135, 153–173, 181–201, 227–247, 263–283, 305–325, 353–373, 381–401, 410–430, and 438–458; these read LVLA…LYAL, VVSL…VMVL, AVGW…DGVI, PALA…LFMI, VGAA…ALGL, GFAG…AEAL, WYGL…ALLL, MVAL…TAVF, IYLP…VLGF, AAFG…FAVL, WWAV…FWLA, and GGWL…CWFG.

The protein belongs to the HAK/KUP transporter (TC 2.A.72) family.

It is found in the cell inner membrane. It catalyses the reaction K(+)(in) + H(+)(in) = K(+)(out) + H(+)(out). In terms of biological role, transport of potassium into the cell. Likely operates as a K(+):H(+) symporter. This is Probable potassium transport system protein Kup 1 from Chromobacterium violaceum (strain ATCC 12472 / DSM 30191 / JCM 1249 / CCUG 213 / NBRC 12614 / NCIMB 9131 / NCTC 9757 / MK).